A 192-amino-acid chain; its full sequence is Fe/S biogenesis protein NfuA (192 aa).

[4Fe-4S] cluster contacts are provided by Cys-149 and Cys-152.

The protein belongs to the NfuA family. In terms of assembly, homodimer. [4Fe-4S] cluster is required as a cofactor.

In terms of biological role, involved in iron-sulfur cluster biogenesis. Binds a 4Fe-4S cluster, can transfer this cluster to apoproteins, and thereby intervenes in the maturation of Fe/S proteins. Could also act as a scaffold/chaperone for damaged Fe/S proteins. This chain is Fe/S biogenesis protein NfuA, found in Shewanella halifaxensis (strain HAW-EB4).